The primary structure comprises 431 residues: POU domain, class 2, transcription factor 3 (431 aa).

Disordered regions lie at residues 1-39 (MVNL…RNGL), 130-180 (LLPQ…EPTD), and 248-267 (DAES…YPTL). The 75-residue stretch at 176 to 250 (DEPTDLEELE…LLEKWLNDAE (75 aa)) folds into the POU-specific domain. Low complexity predominate over residues 251–267 (SSPSDPSASTPSSYPTL). Residues 274–333 (KRKKRTSIETNIRLTLEKRFQDNPKPSSEEISMIAEQLSMEKEVVRVWFCNRRQKEKRIN) constitute a DNA-binding region (homeobox). 3 stretches are compositionally biased toward low complexity: residues 352–364 (PSGS…VPPV), 374–390 (SSCS…PGSG), and 398–419 (ASQN…NSSG). Residues 352 to 419 (PSGSLGPLSV…SSSSSFNSSG (68 aa)) form a disordered region.

Belongs to the POU transcription factor family. Class-2 subfamily. Interacts (via the POU domain) with POU2AF1 and POU2AF2 in a DNA-dependent manner; this interaction recruits POU2AF2 to chromatin and increases POU2F3 transactivation activity. In terms of tissue distribution, skin, thymus, stomach and testis.

The protein resides in the nucleus. Transcription factor that binds to the octamer motif (5'-ATTTGCAT-3'). Regulates cell type-specific differentiation pathways. Involved in the regulation of keratinocytes differentiation. The POU2F3-POU2AF2/POU2AF3 complex drives the expression of tuft-cell-specific genes, a rare chemosensory cells that coordinate immune and neural functions within mucosal epithelial tissues. In Mus musculus (Mouse), this protein is POU domain, class 2, transcription factor 3 (Pou2f3).